The sequence spans 293 residues: NAD kinase (293 aa).

Residue Asp-72 is the Proton acceptor of the active site. NAD(+) is bound by residues 72–73 (DG), 146–147 (ND), Arg-157, Arg-174, Asp-176, 187–192 (TAYALS), and Gln-247.

Belongs to the NAD kinase family. Requires a divalent metal cation as cofactor.

Its subcellular location is the cytoplasm. It catalyses the reaction NAD(+) + ATP = ADP + NADP(+) + H(+). In terms of biological role, involved in the regulation of the intracellular balance of NAD and NADP, and is a key enzyme in the biosynthesis of NADP. Catalyzes specifically the phosphorylation on 2'-hydroxyl of the adenosine moiety of NAD to yield NADP. In Chromohalobacter salexigens (strain ATCC BAA-138 / DSM 3043 / CIP 106854 / NCIMB 13768 / 1H11), this protein is NAD kinase.